A 291-amino-acid polypeptide reads, in one-letter code: 4-hydroxy-tetrahydrodipicolinate synthase (291 aa).

T45 provides a ligand contact to pyruvate. Y133 functions as the Proton donor/acceptor in the catalytic mechanism. The Schiff-base intermediate with substrate role is filled by K161. I203 contributes to the pyruvate binding site.

This sequence belongs to the DapA family. In terms of assembly, homotetramer; dimer of dimers.

It localises to the cytoplasm. It catalyses the reaction L-aspartate 4-semialdehyde + pyruvate = (2S,4S)-4-hydroxy-2,3,4,5-tetrahydrodipicolinate + H2O + H(+). It functions in the pathway amino-acid biosynthesis; L-lysine biosynthesis via DAP pathway; (S)-tetrahydrodipicolinate from L-aspartate: step 3/4. In terms of biological role, catalyzes the condensation of (S)-aspartate-beta-semialdehyde [(S)-ASA] and pyruvate to 4-hydroxy-tetrahydrodipicolinate (HTPA). This Saccharophagus degradans (strain 2-40 / ATCC 43961 / DSM 17024) protein is 4-hydroxy-tetrahydrodipicolinate synthase.